The chain runs to 223 residues: uncharacterized protein (223 aa).

Transmembrane regions (helical) follow at residues 1–21 (MLII…TFYL) and 45–65 (ILIG…TSLI).

It is found in the cell membrane. This is an uncharacterized protein from Haemophilus influenzae (strain ATCC 51907 / DSM 11121 / KW20 / Rd).